A 197-amino-acid chain; its full sequence is MKRIGLLGGSFDPIHVAHVTLAQSALAHLQLDEVQLVPAANPWQRAPLAATAQDRLAMINAAITGLPGLAVNTSEIQRGGATYTVDTILALPQDARYTWILGADQLANFCTWRDWETIVRHVDLAVATRPGSTLQAAPELAQALLEAGRSLRELPFTPMPVSASEIRQRLAQGQNTEGLLPEGVARHIAEHGLYRPA.

It belongs to the NadD family.

It catalyses the reaction nicotinate beta-D-ribonucleotide + ATP + H(+) = deamido-NAD(+) + diphosphate. Its pathway is cofactor biosynthesis; NAD(+) biosynthesis; deamido-NAD(+) from nicotinate D-ribonucleotide: step 1/1. Catalyzes the reversible adenylation of nicotinate mononucleotide (NaMN) to nicotinic acid adenine dinucleotide (NaAD). The sequence is that of Probable nicotinate-nucleotide adenylyltransferase from Bordetella avium (strain 197N).